An 86-amino-acid chain; its full sequence is Cardiotoxin homolog TA-ctx-like (86 aa).

A signal peptide spans M1–T21. 4 cysteine pairs are disulfide-bonded: C24/C45, C38/C62, C66/C78, and C79/C84.

This sequence belongs to the three-finger toxin family. Short-chain subfamily. Orphan group IX sub-subfamily. Expressed by the venom gland.

It is found in the secreted. The sequence is that of Cardiotoxin homolog TA-ctx-like from Bungarus multicinctus (Many-banded krait).